We begin with the raw amino-acid sequence, 467 residues long: Putative ankyrin repeat protein R911 (467 aa).

14 ANK repeats span residues 38-70 (IKTD…PIIV), 79-108 (TLNK…DIRA), 109-138 (GNDY…DIRA), 140-168 (NDYA…NIRA), 170-198 (NDHA…DIRS), 199-228 (DNDY…NIRS), 229-258 (DNDY…DIKS), 260-288 (NDYA…NIRV), 289-318 (NNNY…DIIA), 320-348 (NNFA…DIKS), 350-378 (NDYA…DIRV), 379-408 (ENDY…DIRS), 410-438 (NDYA…DIKA), and 440-467 (DDYA…AVLS).

This is Putative ankyrin repeat protein R911 from Acanthamoeba polyphaga mimivirus (APMV).